Reading from the N-terminus, the 109-residue chain is Phycoerythrin alpha-1 subunit (109 aa).

(2R,3E)-phycocyanobilin is bound by residues valine 6, alanine 16, phenylalanine 17, proline 20, aspartate 27, alanine 28, and alanine 39.

It belongs to the phycoerythrin family. Heterotetramer of 2 identical alpha chains and 2 identical beta chains which form 2 alpha-beta heterodimers within the heterotetramer. The two alpha-beta heterodimers are rotated to an open configuration in contrast to the closed configuration found in other cryptophyte species due to the insertion of a single amino acid, Asp-65, in a conserved region of the alpha chain. In the open form, the central chromophores are not in physical contact but are separated by a water-filled channel. In terms of processing, contains three phycocyanobilin chromophores with binding mediated by both the alpha and beta subunits.

It is found in the plastid. The protein localises to the chloroplast thylakoid membrane. In terms of biological role, light-harvesting photosynthetic tetrapyrrole chromophore-protein from the phycobiliprotein complex. In Hemiselmis virescens, this protein is Phycoerythrin alpha-1 subunit.